Here is a 448-residue protein sequence, read N- to C-terminus: Phosphoglucosamine mutase (448 aa).

The active-site Phosphoserine intermediate is the serine 100. Mg(2+)-binding residues include serine 100, aspartate 240, aspartate 242, and aspartate 244. A Phosphoserine modification is found at serine 100.

The protein belongs to the phosphohexose mutase family. Requires Mg(2+) as cofactor. Activated by phosphorylation.

It carries out the reaction alpha-D-glucosamine 1-phosphate = D-glucosamine 6-phosphate. Functionally, catalyzes the conversion of glucosamine-6-phosphate to glucosamine-1-phosphate. This chain is Phosphoglucosamine mutase, found in Bacillus pumilus (strain SAFR-032).